The following is a 282-amino-acid chain: tRNA uridine(34) hydroxylase (282 aa).

A Rhodanese domain is found at 128–222 (EGRPVVMLDT…YFEEVGGSHY (95 aa)). The active-site Cysteine persulfide intermediate is cysteine 182.

This sequence belongs to the TrhO family.

It catalyses the reaction uridine(34) in tRNA + AH2 + O2 = 5-hydroxyuridine(34) in tRNA + A + H2O. In terms of biological role, catalyzes oxygen-dependent 5-hydroxyuridine (ho5U) modification at position 34 in tRNAs. The sequence is that of tRNA uridine(34) hydroxylase from Cupriavidus taiwanensis (strain DSM 17343 / BCRC 17206 / CCUG 44338 / CIP 107171 / LMG 19424 / R1) (Ralstonia taiwanensis (strain LMG 19424)).